The primary structure comprises 374 residues: Ribosomal RNA large subunit methyltransferase G (374 aa).

Belongs to the methyltransferase superfamily. RlmG family.

The protein resides in the cytoplasm. The enzyme catalyses guanosine(1835) in 23S rRNA + S-adenosyl-L-methionine = N(2)-methylguanosine(1835) in 23S rRNA + S-adenosyl-L-homocysteine + H(+). Functionally, specifically methylates the guanine in position 1835 (m2G1835) of 23S rRNA. The sequence is that of Ribosomal RNA large subunit methyltransferase G from Pseudomonas putida (strain ATCC 47054 / DSM 6125 / CFBP 8728 / NCIMB 11950 / KT2440).